Consider the following 298-residue polypeptide: Acidic endochitinase (298 aa).

Positions 1-29 (MKPNMACLKQVSALLLPLLFISFFKPSHA) are cleaved as a signal peptide. The GH18 domain maps to 30–298 (GGISVYWGQN…GYSGAIIGSV (269 aa)). Intrachain disulfides connect Cys-49–Cys-96 and Cys-79–Cys-86. Glu-156 functions as the Proton donor in the catalytic mechanism. A disulfide bond links Cys-185 and Cys-214.

The protein belongs to the glycosyl hydrolase 18 family. Chitinase class II subfamily.

Its subcellular location is the secreted. It localises to the extracellular space. It catalyses the reaction Random endo-hydrolysis of N-acetyl-beta-D-glucosaminide (1-&gt;4)-beta-linkages in chitin and chitodextrins.. Its function is as follows. This protein functions as a defense against chitin containing fungal pathogens. This Phaseolus angularis (Azuki bean) protein is Acidic endochitinase.